We begin with the raw amino-acid sequence, 456 residues long: Bifunctional protein GlmU (456 aa).

A pyrophosphorylase region spans residues 1-229 (MTKKALSAVI…VMEVEGANNR (229 aa)). UDP-N-acetyl-alpha-D-glucosamine is bound by residues 11-14 (LAAG), K25, Q76, 81-82 (GT), 103-105 (YGD), G140, E154, N169, and N227. D105 is a binding site for Mg(2+). Mg(2+) is bound at residue N227. The linker stretch occupies residues 230–250 (LQLAALERYFQNKQASKLLLE). The tract at residues 251 to 456 (GVMIYDPARF…QGWQRPIKKK (206 aa)) is N-acetyltransferase. 2 residues coordinate UDP-N-acetyl-alpha-D-glucosamine: R333 and K351. The active-site Proton acceptor is H363. Residues Y366 and N377 each contribute to the UDP-N-acetyl-alpha-D-glucosamine site. Acetyl-CoA-binding positions include A380, 386–387 (NY), S405, A423, and R440.

It in the N-terminal section; belongs to the N-acetylglucosamine-1-phosphate uridyltransferase family. The protein in the C-terminal section; belongs to the transferase hexapeptide repeat family. Homotrimer. It depends on Mg(2+) as a cofactor.

The protein localises to the cytoplasm. The enzyme catalyses alpha-D-glucosamine 1-phosphate + acetyl-CoA = N-acetyl-alpha-D-glucosamine 1-phosphate + CoA + H(+). It carries out the reaction N-acetyl-alpha-D-glucosamine 1-phosphate + UTP + H(+) = UDP-N-acetyl-alpha-D-glucosamine + diphosphate. Its pathway is nucleotide-sugar biosynthesis; UDP-N-acetyl-alpha-D-glucosamine biosynthesis; N-acetyl-alpha-D-glucosamine 1-phosphate from alpha-D-glucosamine 6-phosphate (route II): step 2/2. The protein operates within nucleotide-sugar biosynthesis; UDP-N-acetyl-alpha-D-glucosamine biosynthesis; UDP-N-acetyl-alpha-D-glucosamine from N-acetyl-alpha-D-glucosamine 1-phosphate: step 1/1. It participates in bacterial outer membrane biogenesis; LPS lipid A biosynthesis. Functionally, catalyzes the last two sequential reactions in the de novo biosynthetic pathway for UDP-N-acetylglucosamine (UDP-GlcNAc). The C-terminal domain catalyzes the transfer of acetyl group from acetyl coenzyme A to glucosamine-1-phosphate (GlcN-1-P) to produce N-acetylglucosamine-1-phosphate (GlcNAc-1-P), which is converted into UDP-GlcNAc by the transfer of uridine 5-monophosphate (from uridine 5-triphosphate), a reaction catalyzed by the N-terminal domain. The polypeptide is Bifunctional protein GlmU (Haemophilus influenzae (strain ATCC 51907 / DSM 11121 / KW20 / Rd)).